A 428-amino-acid polypeptide reads, in one-letter code: Kynureninase (428 aa).

Pyridoxal 5'-phosphate is bound by residues threonine 104, threonine 105, 132–135 (FPSD), aspartate 213, histidine 216, and tyrosine 238. Lysine 239 bears the N6-(pyridoxal phosphate)lysine mark. Residues tryptophan 267 and threonine 295 each contribute to the pyridoxal 5'-phosphate site.

The protein belongs to the kynureninase family. In terms of assembly, homodimer. The cofactor is pyridoxal 5'-phosphate.

It carries out the reaction L-kynurenine + H2O = anthranilate + L-alanine + H(+). The catalysed reaction is 3-hydroxy-L-kynurenine + H2O = 3-hydroxyanthranilate + L-alanine + H(+). The protein operates within amino-acid degradation; L-kynurenine degradation; L-alanine and anthranilate from L-kynurenine: step 1/1. It participates in cofactor biosynthesis; NAD(+) biosynthesis; quinolinate from L-kynurenine: step 2/3. In terms of biological role, catalyzes the cleavage of L-kynurenine (L-Kyn) and L-3-hydroxykynurenine (L-3OHKyn) into anthranilic acid (AA) and 3-hydroxyanthranilic acid (3-OHAA), respectively. The polypeptide is Kynureninase (Bacillus cereus (strain ZK / E33L)).